The following is a 590-amino-acid chain: G protein-coupled receptor kinase 5 (590 aa).

The tract at residues 1–185 (MELENIVANT…LERQPVTKNT (185 aa)) is N-terminal. An interaction with calmodulin region spans residues 20–39 (GGKRKGKSKKWKEILKFPHI). The RGS domain occupies 53-171 (YCSLCDKQPV…LDSMYFDRFL (119 aa)). Residues 186–448 (FRQYRVLGKG…AAEVKRHPFF (263 aa)) enclose the Protein kinase domain. ATP contacts are provided by residues 192-200 (LGKGGFGEV) and Lys-215. Asp-311 (proton acceptor) is an active-site residue. The short motif at 388–395 (RKEKVKRE) is the Nuclear localization signal element. One can recognise an AGC-kinase C-terminal domain in the interval 449 to 514 (RNMNFKRLEA…GSVPIPWQSE (66 aa)). The residue at position 484 (Ser-484) is a Phosphoserine; by autocatalysis. A Phosphothreonine; by autocatalysis modification is found at Thr-485. The interval 546-565 (PKKGLLQRLFKRQHQNNSKS) is sufficient for membrane localization. Residues 554 to 590 (LFKRQHQNNSKSSPNSKTSFNHHINSNHVSSNSTGSS) are disordered. Residues 561–590 (NNSKSSPNSKTSFNHHINSNHVSSNSTGSS) are compositionally biased toward low complexity. A Phosphoserine modification is found at Ser-579.

This sequence belongs to the protein kinase superfamily. AGC Ser/Thr protein kinase family. GPRK subfamily. Interacts with ST13 (via the C-terminus 303-319 AA). Interacts with TP53/p53. Interacts with HTR4 (via C-terminus 330-346 AA); this interaction is promoted by 5-HT (serotonin). Interacts with HDAC5. Interacts with GIT1. Post-translationally, autophosphorylated. Autophosphorylation may play a critical role in the regulation of GRK5 kinase activity. In terms of tissue distribution, highest levels in lung, heart, retina, lingual epithelium. Very little in brain, liver, kidney.

The protein resides in the cytoplasm. It is found in the nucleus. The protein localises to the cell membrane. The enzyme catalyses [G-protein-coupled receptor] + ATP = [G-protein-coupled receptor]-phosphate + ADP + H(+). Its activity is regulated as follows. Inhibited by calmodulin with an IC(50) of 50 nM. Calmodulin inhibits GRK5 association with receptor and phospholipid. In terms of biological role, serine/threonine kinase that phosphorylates preferentially the activated forms of a variety of G-protein-coupled receptors (GPCRs). Such receptor phosphorylation initiates beta-arrestin-mediated receptor desensitization, internalization, and signaling events leading to their down-regulation. Phosphorylates a variety of GPCRs, including adrenergic receptors (Beta-2 adrenergic receptor), muscarinic acetylcholine receptors (more specifically Gi-coupled M2/M4 subtypes), dopamine receptors and opioid receptors. In addition to GPCRs, also phosphorylates various substrates: Hsc70-interacting protein/ST13, TP53/p53, HDAC5, and arrestin-1/ARRB1. Phosphorylation of ARRB1 by GRK5 inhibits G-protein independent MAPK1/MAPK3 signaling downstream of 5HT4-receptors. Phosphorylation of HDAC5, a repressor of myocyte enhancer factor 2 (MEF2) leading to nuclear export of HDAC5 and allowing MEF2-mediated transcription. Phosphorylation of TP53/p53, a crucial tumor suppressor, inhibits TP53/p53-mediated apoptosis. Phosphorylation of ST13 regulates internalization of the chemokine receptor. Phosphorylates rhodopsin (RHO) (in vitro) and a non G-protein-coupled receptor, LRP6 during Wnt signaling (in vitro). The sequence is that of G protein-coupled receptor kinase 5 (GRK5) from Bos taurus (Bovine).